We begin with the raw amino-acid sequence, 544 residues long: Secreted aspartic protease 9 (544 aa).

The N-terminal stretch at 1-17 (MRLNSVALLSLVATALA) is a signal peptide. The disordered stretch occupies residues 31 to 50 (GESKDDLSPEDDSNPRFVKR). In terms of domain architecture, Peptidase A1 spans 65–479 (YMATLKIGSN…DLDDYEVSLA (415 aa)). 83–85 (DTG) serves as a coordination point for pepstatin A. An intrachain disulfide couples cysteine 98 to cysteine 195. The active site involves threonine 167. Residues asparagine 212, asparagine 240, and asparagine 252 are each glycosylated (N-linked (GlcNAc...) asparagine). The active site involves aspartate 371. 371 to 375 (DTGST) contacts pepstatin A. Residues cysteine 406 and cysteine 441 are joined by a disulfide bond. N-linked (GlcNAc...) asparagine glycans are attached at residues asparagine 422 and asparagine 499. The disordered stretch occupies residues 500-520 (SSGSGTTSSSGTSTSTSTRHS).

This sequence belongs to the peptidase A1 family. Monomer. Post-translationally, the GPI-anchor is attached to the protein in the endoplasmic reticulum and serves to target the protein to the cell surface. There, the glucosamine-inositol phospholipid moiety is cleaved off and the GPI-modified mannoprotein is covalently attached via its lipidless GPI glycan remnant to the 1,6-beta-glucan of the outer cell wall layer.

It is found in the cell membrane. The protein localises to the secreted. It localises to the cell wall. It carries out the reaction Preferential cleavage at the carboxyl of hydrophobic amino acids, but fails to cleave 15-Leu-|-Tyr-16, 16-Tyr-|-Leu-17 and 24-Phe-|-Phe-25 of insulin B chain. Activates trypsinogen, and degrades keratin.. Functionally, secreted aspartic peptidases (SAPs) are a group of ten acidic hydrolases considered as key virulence factors. These enzymes supply the fungus with nutrient amino acids as well as are able to degrade the selected host's proteins involved in the immune defense. Moreover, acts toward human hemoglobin though limited proteolysis to generate a variety of antimicrobial hemocidins, enabling to compete with the other microorganisms of the same physiological niche using the microbicidal peptides generated from the host protein. In terms of biological role, plays a key role in defense against host by cleaving histatin-5 (Hst 5), a peptide from human saliva that carries out fungicidal activity. The cleavage rate decreases in an order of SAP2 &gt; SAP9 &gt; SAP3 &gt; SAP7 &gt; SAP4 &gt; SAP1 &gt; SAP8. The first cleavage occurs between residues 'Lys-17' and 'His-18' of Hst 5, giving DSHAKRHHGYKRKFHEK and HHSHRGY peptides. Simultaneously, the DSHAKRHHGYKRK peptide is also formed. Further fragmentation by SAP9 results in FHEK product. This chain is Secreted aspartic protease 9, found in Candida albicans (Yeast).